A 510-amino-acid chain; its full sequence is MFCGLNDVNVCTISLQMAMWRPNESKVYLPPTPVSKVLSTDVYVTRTNVYYHGGSSRLLTVGHPYYSIKKSGNNKVSVPKVSGYQYRVFHVKLPDPNKFGLPDANLYDPDTQRLLWACVGVEVGRGQPLGVGISGHPYYNKQDDTENSHNPDAADDGREYISMDYKQTQLFILGCKPPIGEHWSKGTTCSGSSAVGDCPPLQFTNTTIEDGDMVETGFGALDFAALQSNKSDVPLDICTNICKYPDYLKMAADPYGDSMFFSLRREQMFTRHFFNRGGSMGDALPDELYVKSSTVQTPGSYVYTSTPSGSMVSSEQQLFNKPYWLRRAQGHNNGMCWGNRIFLTVVDTTRSTNVSLCATVTTETNYKASNYKEYLRHMEEYDLQFIFQLCKITLTPEIMAYIHNMDARLLEDWNFGVPPPPSASLQDTYRYLQSQAITCQKPTPPKTPTDPYATMTFWDVDLSESFSMDLDQFPLGRKFLLQRGATPTVSRKRAAATAAAPTAKRKKVRR.

The interval 490 to 510 (SRKRAAATAAAPTAKRKKVRR) is disordered.

Belongs to the papillomaviridae L1 protein family. Self-assembles into homopentamers. The capsid has an icosahedral symmetry and consists of 72 capsomers, with each capsomer being a pentamer of L1. Interacts with the minor capsid protein L2; this interaction is necessary for viral genome encapsidation. Interacts with protein E2; this interaction enhances E2-dependent replication and transcription activation.

The protein resides in the virion. Its subcellular location is the host nucleus. In terms of biological role, forms an icosahedral capsid with a T=7 symmetry and a 50 nm diameter. The capsid is composed of 72 pentamers linked to each other by disulfide bonds and associated with L2 proteins. Binds to heparan sulfate proteoglycans on cell surface of basal layer keratinocytes to provide initial virion attachment. This binding mediates a conformational change in the virus capsid that facilitates efficient infection. The virion enters the host cell via endocytosis. During virus trafficking, L1 protein dissociates from the viral DNA and the genomic DNA is released to the host nucleus. The virion assembly takes place within the cell nucleus. Encapsulates the genomic DNA together with protein L2. The chain is Major capsid protein L1 from Human papillomavirus 57.